The chain runs to 617 residues: MDFSKLPKILDEDKESTFGYVHGVSGPVVTACDMAGAAMYELVRVGHSELVGEIIRLEGDMATIQVYEETSGVSVGDPVLRTGKPLSVELGPGIMGAIFDGIQRPLSDISSQTQSIYIPRGVNVSALSRDIKWDFTPCKNLRVGSHITGGDIYGIVSENSLIKHKIMLPPRNRGTVTYIAPPGNYDTSDVVLELEFEGVKEKFTMVQVWPVRQVRPVTEKLPANHPLLTGQRVLDALFPCVQGGTTAIPGAFGCGKTVISQSLSKYSNSDVIIYVGCGERGNEMSEVLRDFPELTMEVDGKVESIMKRTALVANTSNMPVAAREASIYTGITLSEYFRDMGYHVSMMADSTSRWAEALREISGRLAEMPADSGYPAYLGARLASFYERAGRVKCLGNPEREGSVSIVGAVSPPGGDFSDPVTSATLGIVQVFWGLDKKLAQRKHFPSVNWLISYSKYMRALDEYYDKHFTEFVPLRTKAKEILQEEEDLAEIVQLVGKASLAETDKITLEVAKLIKDDFLQQNGYTPYDRFCPFYKTVGMLSNMIAFYDMARRAVETTAQSDNKITWSIIREHMGDILYKLSSMKFKDPLKDGEAKIKSDYAQLLEDMQNAFRSLED.

D2 carries the post-translational modification N-acetylalanine. Position 136 is a phosphothreonine (T136). 250–257 lines the ATP pocket; that stretch reads GAFGCGKT. S384 carries the post-translational modification Phosphoserine; by AMPK.

The protein belongs to the ATPase alpha/beta chains family. In terms of assembly, V-ATPase is a heteromultimeric enzyme made up of two complexes: the ATP-hydrolytic V1 complex and the proton translocation V0 complex. The V1 complex consists of three catalytic AB heterodimers that form a heterohexamer, three peripheral stalks each consisting of EG heterodimers, one central rotor including subunits D and F, and the regulatory subunits C and H. The proton translocation complex V0 consists of the proton transport subunit a, a ring of proteolipid subunits c9c'', rotary subunit d, subunits e and f, and the accessory subunits ATP6AP1/Ac45 and ATP6AP2/PRR. Interacts with the V0 complex V-ATPase subunit a4 ATP6V0A4. Interacts with WFS1. Interacts with alpha-crystallin B chain/CRYAB and with MTOR, forming a ternary complex. (Microbial infection) Interacts with Rabies virus protein M; this interaction promotes virion uncoating. In terms of processing, phosphorylation at Ser-384 by AMPK down-regulates its enzyme activity. As to expression, high expression in the skin.

Its subcellular location is the cytoplasm. The protein resides in the cytosol. It is found in the cytoplasmic vesicle. It localises to the secretory vesicle. The protein localises to the clathrin-coated vesicle membrane. Its subcellular location is the lysosome. It carries out the reaction ATP + H2O + 4 H(+)(in) = ADP + phosphate + 5 H(+)(out). ATP hydrolysis occurs at the interface between the nucleotide-binding domains of subunits A and B. ATP hydrolysis triggers a conformational change in the subunits D and F, which induces a shift of subunit d. The c-ring is subsequently rotated and results in a continuous proton translocation across the membrane. Functionally, catalytic subunit of the V1 complex of vacuolar(H+)-ATPase (V-ATPase), a multisubunit enzyme composed of a peripheral complex (V1) that hydrolyzes ATP and a membrane integral complex (V0) that translocates protons. V-ATPase is responsible for acidifying and maintaining the pH of intracellular compartments and in some cell types, is targeted to the plasma membrane, where it is responsible for acidifying the extracellular environment. In aerobic conditions, involved in intracellular iron homeostasis, thus triggering the activity of Fe(2+) prolyl hydroxylase (PHD) enzymes, and leading to HIF1A hydroxylation and subsequent proteasomal degradation. May play a role in neurite development and synaptic connectivity. (Microbial infection) Plays an important role in virion uncoating during Rabies virus replication after membrane fusion. Specifically, participates in the dissociation of incoming viral matrix M proteins uncoating through direct interaction. The polypeptide is V-type proton ATPase catalytic subunit A (ATP6V1A) (Homo sapiens (Human)).